A 716-amino-acid chain; its full sequence is Fatty acid oxidation complex subunit alpha (716 aa).

Residues 1–189 form an enoyl-CoA hydratase/isomerase region; that stretch reads MIYQSPTIQV…KVGAVDSVVA (189 aa). Residue aspartate 296 participates in substrate binding. Residues 311-716 form a 3-hydroxyacyl-CoA dehydrogenase region; it reads KEVNNAAVLG…AANNGSYYQA (406 aa). NAD(+) contacts are provided by residues methionine 324, aspartate 343, 400–402, lysine 407, and serine 429; that span reads VVE. Histidine 450 (for 3-hydroxyacyl-CoA dehydrogenase activity) is an active-site residue. Asparagine 453 is a binding site for NAD(+). Substrate is bound by residues asparagine 500 and tyrosine 660.

It in the N-terminal section; belongs to the enoyl-CoA hydratase/isomerase family. This sequence in the C-terminal section; belongs to the 3-hydroxyacyl-CoA dehydrogenase family. As to quaternary structure, heterotetramer of two alpha chains (FadB) and two beta chains (FadA).

The catalysed reaction is a (3S)-3-hydroxyacyl-CoA + NAD(+) = a 3-oxoacyl-CoA + NADH + H(+). It carries out the reaction a (3S)-3-hydroxyacyl-CoA = a (2E)-enoyl-CoA + H2O. It catalyses the reaction a 4-saturated-(3S)-3-hydroxyacyl-CoA = a (3E)-enoyl-CoA + H2O. The enzyme catalyses (3S)-3-hydroxybutanoyl-CoA = (3R)-3-hydroxybutanoyl-CoA. The catalysed reaction is a (3Z)-enoyl-CoA = a 4-saturated (2E)-enoyl-CoA. It carries out the reaction a (3E)-enoyl-CoA = a 4-saturated (2E)-enoyl-CoA. It participates in lipid metabolism; fatty acid beta-oxidation. Its function is as follows. Involved in the aerobic and anaerobic degradation of long-chain fatty acids via beta-oxidation cycle. Catalyzes the formation of 3-oxoacyl-CoA from enoyl-CoA via L-3-hydroxyacyl-CoA. It can also use D-3-hydroxyacyl-CoA and cis-3-enoyl-CoA as substrate. The sequence is that of Fatty acid oxidation complex subunit alpha from Shewanella baltica (strain OS185).